The sequence spans 149 residues: Protein DOWN-REGULATED IN DIF1 11 (149 aa).

The signal sequence occupies residues 1-22; the sequence is MEKAILITFLIATTSMVYQTIG.

In terms of tissue distribution, mostly expressed in embryo sac cells. Restricted to synergid cells, especially in the filiform apparatus of mature female gametophyte, via MYB98-mediated transcription regulation. Also detected at low levels in egg and central cells.

The sequence is that of Protein DOWN-REGULATED IN DIF1 11 from Arabidopsis thaliana (Mouse-ear cress).